We begin with the raw amino-acid sequence, 232 residues long: 2-C-methyl-D-erythritol 4-phosphate cytidylyltransferase (232 aa).

The protein belongs to the IspD/TarI cytidylyltransferase family. IspD subfamily.

It carries out the reaction 2-C-methyl-D-erythritol 4-phosphate + CTP + H(+) = 4-CDP-2-C-methyl-D-erythritol + diphosphate. The protein operates within isoprenoid biosynthesis; isopentenyl diphosphate biosynthesis via DXP pathway; isopentenyl diphosphate from 1-deoxy-D-xylulose 5-phosphate: step 2/6. In terms of biological role, catalyzes the formation of 4-diphosphocytidyl-2-C-methyl-D-erythritol from CTP and 2-C-methyl-D-erythritol 4-phosphate (MEP). The sequence is that of 2-C-methyl-D-erythritol 4-phosphate cytidylyltransferase from Stenotrophomonas maltophilia (strain K279a).